The primary structure comprises 556 residues: Phosphoglucomutase (556 aa).

R22 and S114 together coordinate alpha-D-glucose 1,6-bisphosphate. Catalysis depends on S114, which acts as the Phosphoserine intermediate. Residues S114, D279, D281, and D283 each contribute to the Mg(2+) site. S114 carries the phosphoserine modification. Alpha-D-glucose 1,6-bisphosphate-binding residues include D283, R284, T347, E366, S368, and K379.

The protein belongs to the phosphohexose mutase family. As to quaternary structure, monomer. Mg(2+) serves as cofactor.

It localises to the cytoplasm. It catalyses the reaction alpha-D-glucose 1-phosphate = alpha-D-glucose 6-phosphate. The catalysed reaction is O-phospho-L-seryl-[protein] + alpha-D-glucose 1-phosphate = alpha-D-glucose 1,6-bisphosphate + L-seryl-[protein]. The enzyme catalyses alpha-D-glucose 1,6-bisphosphate + L-seryl-[protein] = O-phospho-L-seryl-[protein] + alpha-D-glucose 6-phosphate. Functionally, catalyzes the reversible isomerization of alpha-D-glucose 1-phosphate to alpha-D-glucose 6-phosphate. The mechanism proceeds via the intermediate compound alpha-D-glucose 1,6-bisphosphate. Key enzyme in hexose metabolism. The reverse reaction is an essential step for biosynthesis because glucose 1-phosphate is the starting point for the synthesis of UDP-glucose, which acts as a precursor for the synthesis of oligosaccharides and trehalose. This is Phosphoglucomutase (pgmB) from Emericella nidulans (strain FGSC A4 / ATCC 38163 / CBS 112.46 / NRRL 194 / M139) (Aspergillus nidulans).